An 858-amino-acid polypeptide reads, in one-letter code: Protein VACUOLELESS1 (858 aa).

The protein belongs to the VPS16 family. Core component of at least two putative endosomal tethering complexes, the homotypic fusion and vacuole protein sorting (HOPS) complex and the class C core vacuole/endosome tethering (CORVET) complex. Their common core is composed of the class C Vps proteins VPS11, VCL1, VPS18 and VPS33, which in HOPS further associates with VPS39 and VPS41 and in CORVET with VPS3. Expressed in roots, leaves, stems, siliques, flowers and mature pollen.

It localises to the vacuole membrane. It is found in the prevacuolar compartment membrane. In terms of biological role, required for vacuole biogenesis and vacuole enlargment in dividing and expanding cells. Involved in the docking or fusion of prevacuolar vesicles. Important for the function of both male and female gametophytes, but is not essential for the germination and development of pollen. The polypeptide is Protein VACUOLELESS1 (VCL1) (Arabidopsis thaliana (Mouse-ear cress)).